Reading from the N-terminus, the 210-residue chain is Outer-membrane lipoprotein carrier protein (210 aa).

Positions 1 to 22 (MRAFKWALAIGATLALPLTAQA) are cleaved as a signal peptide.

It belongs to the LolA family. In terms of assembly, monomer.

It is found in the periplasm. Participates in the translocation of lipoproteins from the inner membrane to the outer membrane. Only forms a complex with a lipoprotein if the residue after the N-terminal Cys is not an aspartate (The Asp acts as a targeting signal to indicate that the lipoprotein should stay in the inner membrane). The sequence is that of Outer-membrane lipoprotein carrier protein from Chromohalobacter salexigens (strain ATCC BAA-138 / DSM 3043 / CIP 106854 / NCIMB 13768 / 1H11).